The following is a 366-amino-acid chain: Ferredoxin--NADP reductase (366 aa).

FAD contacts are provided by aspartate 51, glutamine 59, tyrosine 64, valine 104, phenylalanine 139, aspartate 308, and threonine 349.

This sequence belongs to the ferredoxin--NADP reductase type 2 family. In terms of assembly, homodimer. Requires FAD as cofactor.

The catalysed reaction is 2 reduced [2Fe-2S]-[ferredoxin] + NADP(+) + H(+) = 2 oxidized [2Fe-2S]-[ferredoxin] + NADPH. The polypeptide is Ferredoxin--NADP reductase (Polaromonas naphthalenivorans (strain CJ2)).